The primary structure comprises 188 residues: UPF0157 protein DR_2534 (188 aa).

The span at methionine 1–arginine 12 shows a compositional bias: gly residues. The interval methionine 1–aspartate 37 is disordered.

Belongs to the UPF0157 (GrpB) family.

This chain is UPF0157 protein DR_2534, found in Deinococcus radiodurans (strain ATCC 13939 / DSM 20539 / JCM 16871 / CCUG 27074 / LMG 4051 / NBRC 15346 / NCIMB 9279 / VKM B-1422 / R1).